A 344-amino-acid polypeptide reads, in one-letter code: Biotin synthase (344 aa).

Residues 40-267 enclose the Radical SAM core domain; sequence AQVQVSTLLS…KSMVRLSAGR (228 aa). Residues Cys-55, Cys-59, and Cys-62 each contribute to the [4Fe-4S] cluster site. 4 residues coordinate [2Fe-2S] cluster: Cys-99, Cys-130, Cys-190, and Arg-262.

The protein belongs to the radical SAM superfamily. Biotin synthase family. In terms of assembly, homodimer. The cofactor is [4Fe-4S] cluster. It depends on [2Fe-2S] cluster as a cofactor.

It carries out the reaction (4R,5S)-dethiobiotin + (sulfur carrier)-SH + 2 reduced [2Fe-2S]-[ferredoxin] + 2 S-adenosyl-L-methionine = (sulfur carrier)-H + biotin + 2 5'-deoxyadenosine + 2 L-methionine + 2 oxidized [2Fe-2S]-[ferredoxin]. It participates in cofactor biosynthesis; biotin biosynthesis; biotin from 7,8-diaminononanoate: step 2/2. Catalyzes the conversion of dethiobiotin (DTB) to biotin by the insertion of a sulfur atom into dethiobiotin via a radical-based mechanism. The sequence is that of Biotin synthase from Xanthomonas axonopodis pv. citri (strain 306).